A 383-amino-acid chain; its full sequence is Succinyl-diaminopimelate desuccinylase (383 aa).

His70 is a binding site for Zn(2+). The active site involves Asp72. Zn(2+) is bound at residue Asp103. The Proton acceptor role is filled by Glu137. Glu138, Glu166, and His352 together coordinate Zn(2+).

This sequence belongs to the peptidase M20A family. DapE subfamily. Homodimer. Zn(2+) is required as a cofactor. The cofactor is Co(2+).

The enzyme catalyses N-succinyl-(2S,6S)-2,6-diaminopimelate + H2O = (2S,6S)-2,6-diaminopimelate + succinate. It functions in the pathway amino-acid biosynthesis; L-lysine biosynthesis via DAP pathway; LL-2,6-diaminopimelate from (S)-tetrahydrodipicolinate (succinylase route): step 3/3. Functionally, catalyzes the hydrolysis of N-succinyl-L,L-diaminopimelic acid (SDAP), forming succinate and LL-2,6-diaminopimelate (DAP), an intermediate involved in the bacterial biosynthesis of lysine and meso-diaminopimelic acid, an essential component of bacterial cell walls. The chain is Succinyl-diaminopimelate desuccinylase from Hahella chejuensis (strain KCTC 2396).